We begin with the raw amino-acid sequence, 434 residues long: Methylenetetrahydrofolate--tRNA-(uracil-5-)-methyltransferase TrmFO (434 aa).

9–14 (GAGLAG) contributes to the FAD binding site.

Belongs to the MnmG family. TrmFO subfamily. The cofactor is FAD.

It localises to the cytoplasm. The catalysed reaction is uridine(54) in tRNA + (6R)-5,10-methylene-5,6,7,8-tetrahydrofolate + NADH + H(+) = 5-methyluridine(54) in tRNA + (6S)-5,6,7,8-tetrahydrofolate + NAD(+). It carries out the reaction uridine(54) in tRNA + (6R)-5,10-methylene-5,6,7,8-tetrahydrofolate + NADPH + H(+) = 5-methyluridine(54) in tRNA + (6S)-5,6,7,8-tetrahydrofolate + NADP(+). Functionally, catalyzes the folate-dependent formation of 5-methyl-uridine at position 54 (M-5-U54) in all tRNAs. In Fusobacterium nucleatum subsp. nucleatum (strain ATCC 25586 / DSM 15643 / BCRC 10681 / CIP 101130 / JCM 8532 / KCTC 2640 / LMG 13131 / VPI 4355), this protein is Methylenetetrahydrofolate--tRNA-(uracil-5-)-methyltransferase TrmFO.